Reading from the N-terminus, the 448-residue chain is MNINTVPELIGRGSASITPGYMSGFKNSFETEALPGALPIGRNSPQRCAYGLYAEQLSGSPFTAPRGSNERSWLYRIRPSVKHSGRFAKADVGLWRTAPCHEHEMPIAQLRWDPPPLPQHEQTFLQGVVTMTTAGDANTQAGMAAHIYLITASMVDQAFYNADGELMFVPQQGSLRFVTEFGRIDAGPGEIVVIPRGVKFRVELTGGPARGYLCENYGGAFTLPERGPIGANCLANARDFLTPVAAYEDKDTPTELFVKWGGTLWATTLPYSPIDVVAWHGNYAPYKYDLRTFSPVGAIGFDHPDPSIFTVLTAPSETPGTANIDFVIFPERWMVADNTFRPPWYHMNIMSEFMGLIYGVYDAKPQGFVPGGASLHNMMLPHGPDREAFDHASNGELKPTKLTGTMAFMFETRYPQRVTEYAATSGLLQPDYADCWTGLEKRFDPTRP.

The active-site Proton acceptor is His303. Residues His346 and Glu352 each contribute to the Fe cation site. Residues Tyr361 and His382 each coordinate homogentisate. His382 contributes to the Fe cation binding site.

It belongs to the homogentisate dioxygenase family. In terms of assembly, hexamer; dimer of trimers. Fe cation serves as cofactor.

The catalysed reaction is homogentisate + O2 = 4-maleylacetoacetate + H(+). The protein operates within amino-acid degradation; L-phenylalanine degradation; acetoacetate and fumarate from L-phenylalanine: step 4/6. Involved in the catabolism of homogentisate (2,5-dihydroxyphenylacetate or 2,5-OH-PhAc), a central intermediate in the degradation of phenylalanine and tyrosine. Catalyzes the oxidative ring cleavage of the aromatic ring of homogentisate to yield maleylacetoacetate. The polypeptide is Homogentisate 1,2-dioxygenase (Rhodopseudomonas palustris (strain BisA53)).